The chain runs to 403 residues: Histidine--tRNA ligase (403 aa).

It belongs to the class-II aminoacyl-tRNA synthetase family. In terms of assembly, homodimer.

It is found in the cytoplasm. The catalysed reaction is tRNA(His) + L-histidine + ATP = L-histidyl-tRNA(His) + AMP + diphosphate + H(+). This is Histidine--tRNA ligase from Sulfurimonas denitrificans (strain ATCC 33889 / DSM 1251) (Thiomicrospira denitrificans (strain ATCC 33889 / DSM 1251)).